We begin with the raw amino-acid sequence, 571 residues long: Dehydrocurvularin exporter (571 aa).

A disordered region spans residues 1-34; the sequence is MADGSDLENNHKPELDRSQPGSTSNGSQEQKDPD. The span at 8-17 shows a compositional bias: basic and acidic residues; the sequence is ENNHKPELDR. Over residues 19–28 the composition is skewed to polar residues; the sequence is QPGSTSNGSQ. Asn25 carries an N-linked (GlcNAc...) asparagine glycan. 14 helical membrane passes run 47–67, 86–106, 120–140, 143–163, 171–191, 202–222, 238–258, 275–295, 317–337, 350–370, 379–399, 405–425, 443–463, and 514–534; these read ILVM…IGII, WYGS…GKLF, FIFL…SVII, AIQG…INYV, LLIG…PVIG, WCFW…LLFL, IILA…VCLT, VIAT…TEWF, LFCL…PIYF, VNTL…GGVI, FELL…ILDV, MYIG…QIPM, IMVM…QSLF, and VFAF…IIPF. Residues 538-571 form a disordered region; sequence PDHGKKDKPATEEAAEEKSEAEGKVSGDKEENHS.

It belongs to the major facilitator superfamily. TCR/Tet family.

The protein localises to the cell membrane. In terms of biological role, efflux pump that is probably involved in the export of dehydrocurvularin. The polypeptide is Dehydrocurvularin exporter (Aspergillus terreus).